Here is a 396-residue protein sequence, read N- to C-terminus: Ribosomal RNA large subunit methyltransferase I (396 aa).

The 80-residue stretch at 2 to 81 (SVRLVLTKGR…ETIDIAFFTR (80 aa)) folds into the PUA domain.

It belongs to the methyltransferase superfamily. RlmI family.

Its subcellular location is the cytoplasm. It carries out the reaction cytidine(1962) in 23S rRNA + S-adenosyl-L-methionine = 5-methylcytidine(1962) in 23S rRNA + S-adenosyl-L-homocysteine + H(+). Functionally, specifically methylates the cytosine at position 1962 (m5C1962) of 23S rRNA. The protein is Ribosomal RNA large subunit methyltransferase I of Enterobacter sp. (strain 638).